The sequence spans 345 residues: Mitochondrial metalloendopeptidase OMA1 (345 aa).

At 1-67 the chain is on the mitochondrial matrix side; sequence MLRNIIRFKG…ILLDKSSRKY (67 aa). The helical transmembrane segment at 68–88 threads the bilayer; that stretch reads LALLFGGCSLFYYTHLDKAPV. Residues 89–345 lie on the Mitochondrial intermembrane side of the membrane; it reads SDRSRFIWVS…GNYYKSFFSM (257 aa). His-203 contributes to the Zn(2+) binding site. Glu-204 is a catalytic residue. Zn(2+)-binding residues include His-207 and Glu-257. The cysteines at positions 272 and 332 are disulfide-linked. The segment at 314 to 345 is required for protease activation; sequence ENMSKWLPKANEIYEQSDCSSMGNYYKSFFSM.

Belongs to the peptidase M48 family. Homooligomer. It depends on Zn(2+) as a cofactor. In terms of processing, forms a redox-dependent disulfide bond, which plays a structural role and regulates its conformational stability and activity.

Its subcellular location is the mitochondrion inner membrane. Its activity is regulated as follows. Protease activity is induced in response to various mitochondrial stress, such as changes in membrane potential, oxidative stress or chronic hyperpolarization, and depends on its C-terminal region. In terms of biological role, protease that is part of the quality control system in the inner membrane of mitochondria. Activated in response to various mitochondrial stress, leading to the proteolytic cleavage of target proteins, such as OXA1 and COX1. Cleaves and thereby promotes the turnover of mistranslated or misfolded membrane proteins. Cleaves the misfolded multi-pass membrane protein OXA1. Involved in quality control of cytochrome oxidase assembly: mediates the cleavage of COX1 in cells lacking COA2. Required for the stability of the respiratory supercomplexes. Required for TOR signaling. This is Mitochondrial metalloendopeptidase OMA1 from Saccharomyces cerevisiae (strain ATCC 204508 / S288c) (Baker's yeast).